A 124-amino-acid chain; its full sequence is Large ribosomal subunit protein bL12 (124 aa).

It belongs to the bacterial ribosomal protein bL12 family. In terms of assembly, homodimer. Part of the ribosomal stalk of the 50S ribosomal subunit. Forms a multimeric L10(L12)X complex, where L10 forms an elongated spine to which 2 to 4 L12 dimers bind in a sequential fashion. Binds GTP-bound translation factors.

Forms part of the ribosomal stalk which helps the ribosome interact with GTP-bound translation factors. Is thus essential for accurate translation. In Cereibacter sphaeroides (strain ATCC 17025 / ATH 2.4.3) (Rhodobacter sphaeroides), this protein is Large ribosomal subunit protein bL12.